The following is a 596-amino-acid chain: Elongation factor 4 (596 aa).

Positions 2–183 (ENIRNFSIIA…AIIKRIPAPK (182 aa)) constitute a tr-type G domain. GTP is bound by residues 14–19 (DHGKST) and 130–133 (NKID).

It belongs to the TRAFAC class translation factor GTPase superfamily. Classic translation factor GTPase family. LepA subfamily.

It localises to the cell inner membrane. The enzyme catalyses GTP + H2O = GDP + phosphate + H(+). In terms of biological role, required for accurate and efficient protein synthesis under certain stress conditions. May act as a fidelity factor of the translation reaction, by catalyzing a one-codon backward translocation of tRNAs on improperly translocated ribosomes. Back-translocation proceeds from a post-translocation (POST) complex to a pre-translocation (PRE) complex, thus giving elongation factor G a second chance to translocate the tRNAs correctly. Binds to ribosomes in a GTP-dependent manner. The chain is Elongation factor 4 from Campylobacter hominis (strain ATCC BAA-381 / DSM 21671 / CCUG 45161 / LMG 19568 / NCTC 13146 / CH001A).